Reading from the N-terminus, the 323-residue chain is G patch domain-containing protein 4 (323 aa).

4 disordered regions span residues 1–32, 84–110, 124–185, and 197–323; these read MSAS…GLGR, GVKV…SNRN, PGGE…SAKL, and AKYG…NKSE. 2 stretches are compositionally biased toward basic and acidic residues: residues 9-32 and 84-94; these read SQGR…GLGR and GVKVNRTKDDD. A G-patch domain is found at 11 to 57; that stretch reads GRRFAEQQMHKHGWTEGKGLGRRENGISEAIKVKVKCDHAGVGHNSA. The span at 131 to 141 shows a compositional bias: low complexity; that stretch reads KEPSSSESSDS. The span at 252 to 261 shows a compositional bias: acidic residues; that stretch reads EREEEEEEES. Over residues 281 to 291 the composition is skewed to basic residues; the sequence is SKKKKSKKKHR. The segment covering 294–306 has biased composition (polar residues); it reads SASPQEEQVTEST. Over residues 311 to 323 the composition is skewed to basic residues; that stretch reads KPKKKKKKKNKSE.

This is G patch domain-containing protein 4 (gpatch4) from Xenopus tropicalis (Western clawed frog).